A 102-amino-acid polypeptide reads, in one-letter code: NADH-quinone oxidoreductase subunit K (102 aa).

3 consecutive transmembrane segments (helical) span residues 6–26 (MEHG…GLMV), 30–50 (ILFI…AFVV), and 62–82 (VMFI…LAIL).

It belongs to the complex I subunit 4L family. NDH-1 is composed of 13 different subunits. Subunits NuoA, H, J, K, L, M, N constitute the membrane sector of the complex.

The protein localises to the cell inner membrane. The catalysed reaction is a quinone + NADH + 5 H(+)(in) = a quinol + NAD(+) + 4 H(+)(out). NDH-1 shuttles electrons from NADH, via FMN and iron-sulfur (Fe-S) centers, to quinones in the respiratory chain. The immediate electron acceptor for the enzyme in this species is believed to be ubiquinone. Couples the redox reaction to proton translocation (for every two electrons transferred, four hydrogen ions are translocated across the cytoplasmic membrane), and thus conserves the redox energy in a proton gradient. In Ectopseudomonas mendocina (strain ymp) (Pseudomonas mendocina), this protein is NADH-quinone oxidoreductase subunit K.